The primary structure comprises 83 residues: Retinal cone rhodopsin-sensitive cGMP 3',5'-cyclic phosphodiesterase subunit gamma (83 aa).

The span at 1–17 (MSDNTVLAPPTSNQGPT) shows a compositional bias: polar residues. Positions 1–51 (MSDNTVLAPPTSNQGPTTPRKGPPKFKQRQTRQFKSKPPKKGVKGFGDDIP) are disordered. Positions 22 to 43 (GPPKFKQRQTRQFKSKPPKKGV) are enriched in basic residues.

It belongs to the rod/cone cGMP-PDE gamma subunit family. As to quaternary structure, tetramer composed of two catalytic chains (alpha and beta), and two inhibitory chains (gamma).

The catalysed reaction is 3',5'-cyclic GMP + H2O = GMP + H(+). Functionally, participates in processes of transmission and amplification of the visual signal. cGMP-PDEs are the effector molecules in G-protein-mediated phototransduction in vertebrate rods and cones. In Bos taurus (Bovine), this protein is Retinal cone rhodopsin-sensitive cGMP 3',5'-cyclic phosphodiesterase subunit gamma (PDE6H).